The chain runs to 101 residues: Apolipoprotein C-II (101 aa).

An N-terminal signal peptide occupies residues 1-22 (MGTRFLLALFLVLLVLGFEVQG). Positions 66–74 (AVDEKLRDM) are lipid binding. Residues 78-101 (STAAVSTYAGIFTDQVLSMLRGEE) are lipoprotein lipase cofactor.

The protein belongs to the apolipoprotein C2 family. Post-translationally, proapolipoprotein C-II is synthesized as a sialic acid containing glycoprotein which is subsequently desialylated prior to its proteolytic processing. In terms of processing, proapolipoprotein C-II, the major form found in plasma undergoes proteolytic cleavage of its N-terminal hexapeptide to generate apolipoprotein C-II, which occurs as the minor form in plasma.

It is found in the secreted. Functionally, component of chylomicrons, very low-density lipoproteins (VLDL), low-density lipoproteins (LDL), and high-density lipoproteins (HDL) in plasma. Plays an important role in lipoprotein metabolism as an activator of lipoprotein lipase. Both proapolipoprotein C-II and apolipoprotein C-II can activate lipoprotein lipase. This is Apolipoprotein C-II (APOC2) from Saimiri boliviensis boliviensis (Bolivian squirrel monkey).